The chain runs to 419 residues: Serine/threonine-protein kinase Kist (419 aa).

Positions 23-304 (WQVQSRLGSG…AEMALCSPFF (282 aa)) constitute a Protein kinase domain. ATP contacts are provided by residues 29-37 (LGSGSSASV) and Lys-54. Residues Asp-141 and Asp-158 each act as proton acceptor in the active site. An RRM domain is found at 324-406 (RLLNVLDDDY…KFVVATFYPL (83 aa)).

Belongs to the protein kinase superfamily. Ser/Thr protein kinase family. As to quaternary structure, interacts with stathmin and CDKN1B/p27Kip1 Interacts with PAM. As to expression, in the embryo, preferentially expressed in the developing nervous system.

The protein localises to the cytoplasm. It localises to the nucleus. It catalyses the reaction L-seryl-[protein] + ATP = O-phospho-L-seryl-[protein] + ADP + H(+). The enzyme catalyses L-threonyl-[protein] + ATP = O-phospho-L-threonyl-[protein] + ADP + H(+). Upon serum stimulation, phosphorylates CDKN1B/p27Kip1, thus controlling CDKN1B subcellular location and cell cycle progression in G1 phase. May be involved in trafficking and/or processing of RNA. The sequence is that of Serine/threonine-protein kinase Kist (Uhmk1) from Rattus norvegicus (Rat).